A 55-amino-acid polypeptide reads, in one-letter code: Large ribosomal subunit protein bL33A (55 aa).

Belongs to the bacterial ribosomal protein bL33 family.

This chain is Large ribosomal subunit protein bL33A, found in Mycobacterium ulcerans (strain Agy99).